The following is a 347-amino-acid chain: 4-hydroxy-2-oxovalerate aldolase (347 aa).

The Pyruvate carboxyltransferase domain maps to 2-252 (ILISDATLRD…DTRTTFERVM (251 aa)). Residue 10–11 (RD) participates in substrate binding. Residue Asp11 coordinates Mn(2+). His14 acts as the Proton acceptor in catalysis. 2 residues coordinate substrate: Ser164 and His191. Mn(2+) contacts are provided by His191 and His193.

Belongs to the 4-hydroxy-2-oxovalerate aldolase family.

It carries out the reaction (S)-4-hydroxy-2-oxopentanoate = acetaldehyde + pyruvate. This chain is 4-hydroxy-2-oxovalerate aldolase, found in Burkholderia pseudomallei (strain 1106a).